Here is a 199-residue protein sequence, read N- to C-terminus: Dephospho-CoA kinase (199 aa).

One can recognise a DPCK domain in the interval 3–199 (ILGLTGSIGM…ATAKMPQRRA (197 aa)). 11–16 (GMGKST) serves as a coordination point for ATP.

The protein belongs to the CoaE family.

The protein resides in the cytoplasm. The catalysed reaction is 3'-dephospho-CoA + ATP = ADP + CoA + H(+). The protein operates within cofactor biosynthesis; coenzyme A biosynthesis; CoA from (R)-pantothenate: step 5/5. Catalyzes the phosphorylation of the 3'-hydroxyl group of dephosphocoenzyme A to form coenzyme A. This is Dephospho-CoA kinase from Rhodopseudomonas palustris (strain BisB18).